The primary structure comprises 614 residues: MANNIDILDYCHSTNDVVQNIVNYKKNNDNYNYLEKHDDENAGISKNNIGVNSNYNRVFVFNNKRGDETKQIDTNMESITPYININSLESTKKINLVDESSKNYNMGNNWYHQNKYNNKMNNSKNSKNSHNKHISIAHIKYDDQEINEKGKNKLYEENQTNTKKTWKRRAFSPFTPGGVRSSTVLFLCTAIGVGLLSIPYVFSELGIILSIILILLNSLESYITTNILCMSSLEHNIFVYGNLLEKIGNKYYKTLIDFGLTFSFLSGYVLVLILVNDYLSNILYTFNFPSFISNRIFITIVICLLVLPLTFREHIGSINCFLVFSLFSITLTVLAVGYQSKYYMSLLPEKNISLFKINKHFFKCFNILLFSFSQQSNACFITGQFNQPTQRRVTKSESRSILIQVIFYTLFGLLGYLSFLNTTKDNIILNYEETNMSILLCKFFLCISFFFSIPLNFIATYPSMISLYTSIRNKIQKLYSVLFTRNEYLPSFSNILRYDTENPFDEYTLDENTENSSTSESQGDDMFQRKCAAIFVTCLCAFVEFNVSKLSNFIGIFGGFTSSIISCILPNLIYYKNMHTFKNKIERYATLALLCFFSVIGLISSIVTAFIIIY.

11 helical membrane-spanning segments follow: residues 184-216 (VLFLCTAIGVGLLSIPYVFSELGIILSIILILL), 222-243 (YITTNILCMSSLEHNIFVYGNL), 255-275 (LIDFGLTFSFLSGYVLVLILV), 295-311 (RIFITIVICLLVLPLTF), 318-340 (INCFLVFSLFSITLTVLAVGYQS), 360-380 (HFFKCFNILLFSFSQQSNACF), 401-417 (ILIQVIFYTLFGLLGYL), 437-459 (SILLCKFFLCISFFFSIPLNFIA), 531-547 (CAAIFVTCLCAFVEFNV), 553-575 (FIGIFGGFTSSIISCILPNLIYY), and 587-613 (RYATLALLCFFSVIGLISSIVTAFIII).

It belongs to the amino acid/polyamine transporter 2 family.

The protein resides in the vacuole membrane. In terms of biological role, putative amino acid transporter. Involved in maintaining the osmotic homeostasis of the digestive vacuole. Important for the timely development and growth of the asexual-stage parasites and male gametocyte maturation. This chain is Putative amino acid transporter AAT1, found in Plasmodium berghei (strain Anka).